Reading from the N-terminus, the 131-residue chain is Agouti-related protein (131 aa).

The N-terminal stretch at 1–20 (MLTAMLLSCVLLLALPPTLG) is a signal peptide. The propeptide occupies 21–81 (VQMGVAPLKG…VLDPQNRESR (61 aa)). Cystine bridges form between Cys-86–Cys-101, Cys-93–Cys-107, Cys-100–Cys-118, Cys-104–Cys-128, and Cys-109–Cys-116. An Agouti domain is found at 86 to 128 (CVRLHESCLGQQVPCCDPCATCYCRFFNAFCYCRKLGTATNLC). Residues 110-112 (RFF) form an interaction with melanocortin receptors region.

In terms of assembly, interacts with melanocortin receptors MC3R, MC4R and MC5R. Expressed in arcuate nucleus and median eminence, adrenal gland (medulla), hypothalamus, testis, and lung.

Its subcellular location is the secreted. The protein resides in the golgi apparatus lumen. In terms of biological role, plays a role in weight homeostasis. Involved in the control of feeding behavior through the central melanocortin system. Acts as alpha melanocyte-stimulating hormone antagonist by inhibiting cAMP production mediated by stimulation of melanocortin receptors within the hypothalamus and adrenal gland. Has very low activity with MC5R. Is an inverse agonist for MC3R and MC4R being able to suppress their constitutive activity. It promotes MC3R and MC4R endocytosis in an arrestin-dependent manner. The protein is Agouti-related protein (Agrp) of Mus musculus (Mouse).